The primary structure comprises 82 residues: uncharacterized protein (82 aa).

A compositionally biased stretch (basic and acidic residues) spans 1-11 (MKARGSRENAS). The interval 1–25 (MKARGSRENASKRRPSQTQYDTHLR) is disordered. Polar residues predominate over residues 16 to 25 (SQTQYDTHLR).

This is an uncharacterized protein from Human cytomegalovirus (strain AD169) (HHV-5).